A 334-amino-acid chain; its full sequence is MASGTLAPGCRISATEVPGSRPNCHLTSSYFSHRIIPPIPFTPPTVQSTVADPLPQVAKQDSHNWAFDEVLSRWETTSGSAYVPKTHGGPCAQPRAPEPADPTRTVGIKDLGEKLRHRGWRLPLTTKYQSSETRAQYTGSPSGDPRAPEYFGPQPPQLADHHRGGPSQALIAWTKNPELSGRPFTVSDRGVLDRRQLYLTTSARDFRFYPKTELSGYPRKDSLTYWSFEETPQVWSHGPQRPPCPRSSRPPRPPRVRVPRVSPVTSAMPHRGALSLAQESYSPLLHPLRRLDRFCPLEAPWGGPHWKPLRGIYSVPKAYSTENSSYGSLKPALV.

Disordered regions lie at residues 81-105 (AYVPKTHGGPCAQPRAPEPADPTRT), 128-153 (YQSSETRAQYTGSPSGDPRAPEYFGP), and 233-260 (QVWSHGPQRPPCPRSSRPPRPPRVRVPR). The span at 128 to 141 (YQSSETRAQYTGSP) shows a compositional bias: polar residues. A compositionally biased stretch (pro residues) spans 240–251 (QRPPCPRSSRPP).

The polypeptide is Stabilizer of axonemal microtubules 3 (Homo sapiens (Human)).